The primary structure comprises 294 residues: UPF0282 protein APE_0500.1 (294 aa).

The protein belongs to the UPF0282 family.

In Aeropyrum pernix (strain ATCC 700893 / DSM 11879 / JCM 9820 / NBRC 100138 / K1), this protein is UPF0282 protein APE_0500.1.